An 834-amino-acid chain; its full sequence is WW domain-containing adapter protein with coiled-coil homolog (834 aa).

Disordered regions lie at residues 1–247 (MVMH…WSEH), 268–411 (KPKE…SVAT), and 430–504 (VTGA…GAKG). Over residues 22–31 (HTSYQSSKYS) the composition is skewed to low complexity. The segment covering 33–50 (SKRDYERDRSSNYRDRDL) has biased composition (basic and acidic residues). A compositionally biased stretch (gly residues) spans 53–77 (GAGGGGGGGSAGGGGGGSGNGGGPL). Basic and acidic residues predominate over residues 96–108 (RSHDLRDRSDHRG). Gly residues predominate over residues 109 to 119 (GGGGNGRGGSG). Basic and acidic residues-rich tracts occupy residues 127–168 (KMRD…DRRG), 181–246 (SSRE…DWSE), and 268–303 (KPKEWVDRERNLPRDQHREKDYRDKDRDRDRDDRFS). Residues 244-271 (WSEHVSSSGKMYYYNCKTEISQWEKPKE) enclose the WW domain. Composition is skewed to polar residues over residues 304–314 (RSTYKHSNSSR) and 350–363 (GDSTPTSEASYSLS). Residues 369 to 384 (HGGGPGGGGPGGGGGS) show a composition bias toward gly residues. Low complexity-rich tracts occupy residues 402-411 (TANSSASVAT) and 431-466 (TGATMLPTMSGMLNSNSSNSAGGSSSNASSSSLRNS). Positions 472-496 (GSTSGTTVPTLGSQDPHQHHLNSNA) are enriched in polar residues.

Expressed in adult head and thorax and in larval central nervous system and fat body.

The protein resides in the nucleus. The protein localises to the lysosome. In terms of biological role, acts as a linker between gene transcription and histone H2B monoubiquitination at 'Lys-118'. Regulates the cell-cycle checkpoint activation in response to DNA damage. Positive regulator of amino acid starvation-induced autophagy. Also acts as a negative regulator of basal autophagy. Positively regulates mTor activity. Promotes, in an energy-dependent manner, the assembly of the TTT complex and the RUVBL complex composed of pont and rept into the TTT-RUVBL complex. This leads to dimerization of the mTORC1 complex and its subsequent activation. May negatively regulate the ubiquitin proteasome pathway. Required for habituation, a form of non-associative learning. The chain is WW domain-containing adapter protein with coiled-coil homolog from Drosophila melanogaster (Fruit fly).